Here is a 324-residue protein sequence, read N- to C-terminus: UDP-N-acetylenolpyruvoylglucosamine reductase (324 aa).

The 168-residue stretch at 36-203 (FRAGGLAELM…TSVLFEGYPE (168 aa)) folds into the FAD-binding PCMH-type domain. The active site involves Arg-183. Ser-232 functions as the Proton donor in the catalytic mechanism. Glu-302 is an active-site residue.

Belongs to the MurB family. FAD is required as a cofactor.

It is found in the cytoplasm. The catalysed reaction is UDP-N-acetyl-alpha-D-muramate + NADP(+) = UDP-N-acetyl-3-O-(1-carboxyvinyl)-alpha-D-glucosamine + NADPH + H(+). It participates in cell wall biogenesis; peptidoglycan biosynthesis. In terms of biological role, cell wall formation. The sequence is that of UDP-N-acetylenolpyruvoylglucosamine reductase from Rhizobium etli (strain CIAT 652).